Here is a 201-residue protein sequence, read N- to C-terminus: Probable DNA replication complex GINS protein PSF1 (201 aa).

Belongs to the GINS1/PSF1 family. In terms of assembly, component of the GINS complex which is a heterotetramer of gins1, gins2, gins3 and gins4.

The protein resides in the nucleus. In terms of biological role, the GINS complex plays an essential role in the initiation of DNA replication. This is Probable DNA replication complex GINS protein PSF1 from Caenorhabditis briggsae.